A 418-amino-acid chain; its full sequence is Glutamyl-tRNA reductase (418 aa).

Substrate contacts are provided by residues 49 to 52 (TCNR), Ser107, 112 to 114 (EPQ), and Gln118. The active-site Nucleophile is Cys50. NADP(+) is bound at residue 187–192 (GAGETI).

Belongs to the glutamyl-tRNA reductase family. In terms of assembly, homodimer.

The catalysed reaction is (S)-4-amino-5-oxopentanoate + tRNA(Glu) + NADP(+) = L-glutamyl-tRNA(Glu) + NADPH + H(+). It functions in the pathway porphyrin-containing compound metabolism; protoporphyrin-IX biosynthesis; 5-aminolevulinate from L-glutamyl-tRNA(Glu): step 1/2. In terms of biological role, catalyzes the NADPH-dependent reduction of glutamyl-tRNA(Glu) to glutamate 1-semialdehyde (GSA). This is Glutamyl-tRNA reductase from Vibrio parahaemolyticus serotype O3:K6 (strain RIMD 2210633).